We begin with the raw amino-acid sequence, 206 residues long: Peptidyl-tRNA hydrolase (206 aa).

Tyrosine 19 lines the tRNA pocket. Histidine 24 (proton acceptor) is an active-site residue. Positions 70, 72, and 118 each coordinate tRNA.

The protein belongs to the PTH family. Monomer.

It localises to the cytoplasm. It catalyses the reaction an N-acyl-L-alpha-aminoacyl-tRNA + H2O = an N-acyl-L-amino acid + a tRNA + H(+). Hydrolyzes ribosome-free peptidyl-tRNAs (with 1 or more amino acids incorporated), which drop off the ribosome during protein synthesis, or as a result of ribosome stalling. Functionally, catalyzes the release of premature peptidyl moieties from peptidyl-tRNA molecules trapped in stalled 50S ribosomal subunits, and thus maintains levels of free tRNAs and 50S ribosomes. The polypeptide is Peptidyl-tRNA hydrolase (Prochlorococcus marinus (strain MIT 9313)).